Consider the following 127-residue polypeptide: MRGAGAILRPAARGARDLNPRRDISSWLAQWFPRTPARSVVALKTPIKVELVAGKTYRWCVCGRSKKQPFCDGSHFFQRTGLSPLKFKAQETRMVALCTCKATQRPPYCDGTHRSERVQKAEVGSPL.

The transit peptide at 1-14 (MRGAGAILRPAARG) directs the protein to the mitochondrion. The residue at position 55 (Lys55) is an N6-acetyllysine; alternate. Lys55 carries the post-translational modification N6-succinyllysine; alternate. Cys60, Cys62, Cys71, and His75 together coordinate [2Fe-2S] cluster. Lys86 is subject to N6-acetyllysine. Residues Cys98, Cys100, Cys109, and His113 each contribute to the [2Fe-2S] cluster site.

This sequence belongs to the CISD protein family. As to quaternary structure, monomer. Requires [2Fe-2S] cluster as cofactor.

It localises to the mitochondrion. In terms of biological role, can transfer its iron-sulfur clusters to the apoferrodoxins FDX1 and FDX2. Contributes to mitochondrial iron homeostasis and in maintaining normal levels of free iron and reactive oxygen species, and thereby contributes to normal mitochondrial function. This is CDGSH iron-sulfur domain-containing protein 3, mitochondrial (CISD3) from Homo sapiens (Human).